The sequence spans 338 residues: Lipoate-protein ligase A (338 aa).

The BPL/LPL catalytic domain maps to 29–216 (PATQRVLFLW…AFFAYYGERV (188 aa)). Residues R71, 76 to 79 (GAVF), and K134 each bind ATP. (R)-lipoate is bound at residue K134.

This sequence belongs to the LplA family. As to quaternary structure, monomer.

The protein resides in the cytoplasm. The enzyme catalyses L-lysyl-[lipoyl-carrier protein] + (R)-lipoate + ATP = N(6)-[(R)-lipoyl]-L-lysyl-[lipoyl-carrier protein] + AMP + diphosphate + H(+). The protein operates within protein modification; protein lipoylation via exogenous pathway; protein N(6)-(lipoyl)lysine from lipoate: step 1/2. Its pathway is protein modification; protein lipoylation via exogenous pathway; protein N(6)-(lipoyl)lysine from lipoate: step 2/2. Catalyzes both the ATP-dependent activation of exogenously supplied lipoate to lipoyl-AMP and the transfer of the activated lipoyl onto the lipoyl domains of lipoate-dependent enzymes. The chain is Lipoate-protein ligase A from Cronobacter sakazakii (strain ATCC BAA-894) (Enterobacter sakazakii).